The primary structure comprises 275 residues: 2-dehydro-3-deoxyphosphooctonate aldolase (275 aa).

The protein belongs to the KdsA family.

Its subcellular location is the cytoplasm. It catalyses the reaction D-arabinose 5-phosphate + phosphoenolpyruvate + H2O = 3-deoxy-alpha-D-manno-2-octulosonate-8-phosphate + phosphate. It participates in carbohydrate biosynthesis; 3-deoxy-D-manno-octulosonate biosynthesis; 3-deoxy-D-manno-octulosonate from D-ribulose 5-phosphate: step 2/3. It functions in the pathway bacterial outer membrane biogenesis; lipopolysaccharide biosynthesis. The chain is 2-dehydro-3-deoxyphosphooctonate aldolase from Francisella tularensis subsp. novicida (strain U112).